Consider the following 486-residue polypeptide: Elastin-binding protein EbpS (486 aa).

Over residues 1 to 40 (MSNNFKDDFEKNRQSIDTNSHQDHTEDVEKDQSELEHQDT) the composition is skewed to basic and acidic residues. The interval 1 to 314 (MSNNFKDDFE…NHDRDKERKK (314 aa)) is disordered. Residues 2–204 (SNNFKDDFEK…EPKEHHNGKK (203 aa)) are Extracellular-facing. The segment at 14 to 34 (QSIDTNSHQDHTEDVEKDQSE) is elastin-binding. Residues 64 to 85 (TNHNKQVHNESQTSEDNVQNEA) are compositionally biased toward polar residues. Basic and acidic residues-rich tracts occupy residues 103–118 (EPSH…EEYY) and 126–143 (DKSH…DTIK). Residues 161 to 179 (EQSQQPKPYFTTGANQSET) show a composition bias toward polar residues. The span at 180–199 (SKNEHDNDSVKQDQDEPKEH) shows a compositional bias: basic and acidic residues. A compositionally biased stretch (low complexity) spans 204–225 (KAAAIGAGTAGVAGAAGAMAAS). A helical membrane pass occupies residues 205–225 (AAAIGAGTAGVAGAAGAMAAS). Residues 226–319 (KAKKHSNDAQ…KERKKGGMAK (94 aa)) are Cytoplasmic-facing. The span at 233–246 (DAQNKSNSGKANNS) shows a compositional bias: polar residues. The segment covering 247–259 (TEDKASQDKSKDH) has biased composition (basic and acidic residues). Residues 278 to 297 (GAASKSASAASKPHASNNAS) are compositionally biased toward low complexity. The span at 299–314 (NHDEHDNHDRDKERKK) shows a compositional bias: basic and acidic residues. Residues 320–340 (VLLPLIAAVLIIGALAIFGGM) form a helical membrane-spanning segment. Residues 341 to 486 (ALNNHNNGTK…IRNGQQIVIP (146 aa)) lie on the Extracellular side of the membrane. Residues 351 to 440 (ENKIANTNKN…QRQGGGQRHT (90 aa)) form a disordered region. Residues 361 to 398 (NADESKDKDTSKDASKDKSKSTDSDKSKEDQDKATKDE) are compositionally biased toward basic and acidic residues. The segment covering 403–431 (QNNANQANNQAQNNQNQQQANQNQQQQQQ) has biased composition (low complexity). In terms of domain architecture, LysM spans 437-485 (QRHTVNGQENLYRIAIQYYGSGSPENVEKIRRANGLSGNNIRNGQQIVI).

It localises to the cell membrane. Promotes binding of soluble elastin peptides and tropoelastin to S.aureus cells although it is not able to promote bacterial adherence to immobilized elastin and, therefore, is not a microbial surface component recognizing adhesive matrix molecule (MSCRAMM). This chain is Elastin-binding protein EbpS (ebpS), found in Staphylococcus aureus (strain USA300).